We begin with the raw amino-acid sequence, 1014 residues long: Ephrin type-B receptor 6 (1014 aa).

An N-terminal signal peptide occupies residues 1-32 (MATEGTTGSGSRVVAGMVCSLWLLVLGSSVLA). The Extracellular portion of the chain corresponds to 33–591 (LEEVLLDTTG…LPEKLSLVIG (559 aa)). Residues 34 to 232 (EEVLLDTTGE…FSYTCPSVLR (199 aa)) enclose the Eph LBD domain. 2 consecutive Fibronectin type-III domains span residues 364–479 (PPSA…TSHE) and 480–575 (VPSA…TLPQ). Residue Asn473 is glycosylated (N-linked (GlcNAc...) asparagine). Residues 592–612 (SILGALAFLLLAAITVLAVIF) traverse the membrane as a helical segment. The Cytoplasmic segment spans residues 613-1014 (QRKRRGTGYT…HLRQPGSVEV (402 aa)). Positions 663–912 (IKIEEVIGAG…QLVAAFDKMI (250 aa)) constitute a Protein kinase domain. 669–677 (IGAGSFGEV) provides a ligand contact to ATP. In terms of domain architecture, SAM spans 941 to 1005 (PCLDSPQAWL…LHNIQLLQQH (65 aa)). The PDZ-binding signature appears at 1012–1014 (VEV).

The protein belongs to the protein kinase superfamily. Tyr protein kinase family. Ephrin receptor subfamily. Interacts with CBL and EPHB1. Interacts with FYN; this interaction takes place in a ligand-independent manner. Ligand-binding increases phosphorylation on tyrosine residues. Phosphorylation on tyrosine residues is mediated by transphosphorylation by the catalytically active EPHB1 in a ligand-independent manner. Tyrosine phosphorylation of the receptor may act as a switch on the functional transition from cell adhesion/attraction to de-adhesion/repulsion. In terms of tissue distribution, high level in thymus, and brain. Very low levels of expression in kidney, lung, liver, bone marrow, skeletal muscle, spleen from 2 week old and adult mice, heart, testes and embryonic stem cells.

It localises to the cell membrane. The protein localises to the secreted. Kinase-defective receptor for members of the ephrin-B family. Binds to ephrin-B1 and ephrin-B2. Modulates cell adhesion and migration by exerting both positive and negative effects upon stimulation with ephrin-B2. Inhibits JNK activation, T-cell receptor-induced IL-2 secretion and CD25 expression upon stimulation with ephrin-B2. The chain is Ephrin type-B receptor 6 (Ephb6) from Mus musculus (Mouse).